The primary structure comprises 391 residues: Casein kinase II subunit alpha (391 aa).

Residues 36-41 (QDDYQL) form an interaction with beta subunit region. Residues 39–324 (YQLVRKLGRG…AREAMEHPYF (286 aa)) form the Protein kinase domain. Residues 45-53 (LGRGKYSEV) and Lys68 contribute to the ATP site. Asp156 (proton acceptor) is an active-site residue. Phosphothreonine; by CDK1 is present on residues Thr344 and Thr360. 2 positions are modified to phosphoserine; by CDK1: Ser362 and Ser370.

This sequence belongs to the protein kinase superfamily. Ser/Thr protein kinase family. CK2 subfamily. As to quaternary structure, heterotetramer composed of two catalytic subunits (alpha chain and/or alpha' chain) and two regulatory subunits (beta chains). The tetramer can exist as a combination of 2 alpha/2 beta, 2 alpha'/2 beta or 1 alpha/1 alpha'/2 beta subunits. Also part of a CK2-SPT16-SSRP1 complex composed of SSRP1, SUPT16H, CSNK2A1, CSNK2A2 and CSNK2B, which forms following UV irradiation. Interacts with RNPS1. Interacts with SNAI1. Interacts with PML. Interacts with CCAR2. Interacts with HIRIP3. In terms of processing, phosphorylated at Thr-344, Thr-360, Ser-362 and Ser-370 by CDK1 in prophase and metaphase and dephosphorylated during anaphase. Phosphorylation does not directly affect casein kinase 2 activity, but may contribute to its regulation by forming binding sites for interacting proteins and/or targeting it to different compartments.

The protein resides in the nucleus. It catalyses the reaction L-seryl-[protein] + ATP = O-phospho-L-seryl-[protein] + ADP + H(+). The catalysed reaction is L-threonyl-[protein] + ATP = O-phospho-L-threonyl-[protein] + ADP + H(+). Its activity is regulated as follows. Constitutively active protein kinase whose activity is not directly affected by phosphorylation. Seems to be regulated by level of expression and localization. Functionally, catalytic subunit of a constitutively active serine/threonine-protein kinase complex that phosphorylates a large number of substrates containing acidic residues C-terminal to the phosphorylated serine or threonine. Regulates numerous cellular processes, such as cell cycle progression, apoptosis and transcription, as well as viral infection. May act as a regulatory node which integrates and coordinates numerous signals leading to an appropriate cellular response. During mitosis, functions as a component of the p53/TP53-dependent spindle assembly checkpoint (SAC) that maintains cyclin-B-CDK1 activity and G2 arrest in response to spindle damage. Also required for p53/TP53-mediated apoptosis, phosphorylating 'Ser-392' of p53/TP53 following UV irradiation. Phosphorylates a number of DNA repair proteins in response to DNA damage, such as MDC1, MRE11, RAD9A, RAD51 and HTATSF1, promoting their recruitment to DNA damage sites. Can also negatively regulate apoptosis. Phosphorylates the caspases CASP9 and CASP2 and the apoptotic regulator NOL3. Phosphorylation protects CASP9 from cleavage and activation by CASP8, and inhibits the dimerization of CASP2 and activation of CASP8. Phosphorylates YY1, protecting YY1 from cleavage by CASP7 during apoptosis. Regulates transcription by direct phosphorylation of RNA polymerases I, II, III and IV. Also phosphorylates and regulates numerous transcription factors including NF-kappa-B, STAT1, CREB1, IRF1, IRF2, ATF1, ATF4, SRF, MAX, JUN, FOS, MYC and MYB. Phosphorylates Hsp90 and its co-chaperones FKBP4 and CDC37, which is essential for chaperone function. Mediates sequential phosphorylation of FNIP1, promoting its gradual interaction with Hsp90, leading to activate both kinase and non-kinase client proteins of Hsp90. Regulates Wnt signaling by phosphorylating CTNNB1 and the transcription factor LEF1. Acts as an ectokinase that phosphorylates several extracellular proteins. Plays an important role in the circadian clock function by phosphorylating BMAL1 at 'Ser-90' which is pivotal for its interaction with CLOCK and which controls CLOCK nuclear entry. Phosphorylates FMR1, promoting FMR1-dependent formation of a membraneless compartment. May phosphorylate histone H2A on 'Ser-1'. The chain is Casein kinase II subunit alpha (CSNK2A1) from Bos taurus (Bovine).